The primary structure comprises 165 residues: MIIEGPVIKFGDKIDTDIIIPARYLKYTDPQYLAQHVMEPLDPEFYKKASKGVIIVAGKVFGMGSSREQAAIALKAAGVKAVVAESFARIFYRNAINNGLPVITLPNSTKEIDENSYVKIDVETGEILVGNKVLKGKGITGMALEILQAGGIMEYLKKMQTVNRN.

Belongs to the LeuD family. LeuD type 2 subfamily. As to quaternary structure, heterodimer of LeuC and LeuD.

It catalyses the reaction (2R,3S)-3-isopropylmalate = (2S)-2-isopropylmalate. Its pathway is amino-acid biosynthesis; L-leucine biosynthesis; L-leucine from 3-methyl-2-oxobutanoate: step 2/4. In terms of biological role, catalyzes the isomerization between 2-isopropylmalate and 3-isopropylmalate, via the formation of 2-isopropylmaleate. This is 3-isopropylmalate dehydratase small subunit from Saccharolobus islandicus (strain Y.G.57.14 / Yellowstone #1) (Sulfolobus islandicus).